The sequence spans 486 residues: Glutamyl-tRNA(Gln) amidotransferase subunit A (486 aa).

Catalysis depends on charge relay system residues K74 and S149. The active-site Acyl-ester intermediate is the S173.

The protein belongs to the amidase family. GatA subfamily. In terms of assembly, heterotrimer of A, B and C subunits.

The catalysed reaction is L-glutamyl-tRNA(Gln) + L-glutamine + ATP + H2O = L-glutaminyl-tRNA(Gln) + L-glutamate + ADP + phosphate + H(+). Allows the formation of correctly charged Gln-tRNA(Gln) through the transamidation of misacylated Glu-tRNA(Gln) in organisms which lack glutaminyl-tRNA synthetase. The reaction takes place in the presence of glutamine and ATP through an activated gamma-phospho-Glu-tRNA(Gln). In Prochlorococcus marinus (strain NATL2A), this protein is Glutamyl-tRNA(Gln) amidotransferase subunit A.